Here is a 585-residue protein sequence, read N- to C-terminus: Arginine--tRNA ligase (585 aa).

The 'HIGH' region motif lies at 131 to 141 (ANPTGPMHVGH).

This sequence belongs to the class-I aminoacyl-tRNA synthetase family. Monomer.

Its subcellular location is the cytoplasm. It carries out the reaction tRNA(Arg) + L-arginine + ATP = L-arginyl-tRNA(Arg) + AMP + diphosphate. This Brucella ovis (strain ATCC 25840 / 63/290 / NCTC 10512) protein is Arginine--tRNA ligase.